Reading from the N-terminus, the 332-residue chain is UPF0285 protein MK0078 (332 aa).

Belongs to the UPF0285 family.

In Methanopyrus kandleri (strain AV19 / DSM 6324 / JCM 9639 / NBRC 100938), this protein is UPF0285 protein MK0078.